The chain runs to 600 residues: Arginine--tRNA ligase (600 aa).

L-arginine contacts are provided by residues 151–153 (SPN), His162, Tyr332, Asp336, and Gln360. The short motif at 152–162 (PNIAKEMHIGH) is the 'HIGH' region element.

Belongs to the class-I aminoacyl-tRNA synthetase family.

It carries out the reaction tRNA(Arg) + L-arginine + ATP = L-arginyl-tRNA(Arg) + AMP + diphosphate. The protein is Arginine--tRNA ligase (RARS) of Acanthamoeba polyphaga mimivirus (APMV).